A 328-amino-acid polypeptide reads, in one-letter code: Ketol-acid reductoisomerase (NADP(+)) (328 aa).

Residues 2–182 (AKIYRDVDAS…GATRAGVIET (181 aa)) form the KARI N-terminal Rossmann domain. NADP(+) contacts are provided by residues 25–28 (YGIQ), arginine 48, serine 53, and 83–86 (DMEQ). Residue histidine 108 is part of the active site. Glycine 134 contacts NADP(+). One can recognise a KARI C-terminal knotted domain in the interval 183–328 (TFAEETETDL…IEMRRLLFGQ (146 aa)). Aspartate 191, glutamate 195, glutamate 227, and glutamate 231 together coordinate Mg(2+). Serine 252 is a binding site for substrate.

It belongs to the ketol-acid reductoisomerase family. It depends on Mg(2+) as a cofactor.

It carries out the reaction (2R)-2,3-dihydroxy-3-methylbutanoate + NADP(+) = (2S)-2-acetolactate + NADPH + H(+). It catalyses the reaction (2R,3R)-2,3-dihydroxy-3-methylpentanoate + NADP(+) = (S)-2-ethyl-2-hydroxy-3-oxobutanoate + NADPH + H(+). It participates in amino-acid biosynthesis; L-isoleucine biosynthesis; L-isoleucine from 2-oxobutanoate: step 2/4. It functions in the pathway amino-acid biosynthesis; L-valine biosynthesis; L-valine from pyruvate: step 2/4. In terms of biological role, involved in the biosynthesis of branched-chain amino acids (BCAA). Catalyzes an alkyl-migration followed by a ketol-acid reduction of (S)-2-acetolactate (S2AL) to yield (R)-2,3-dihydroxy-isovalerate. In the isomerase reaction, S2AL is rearranged via a Mg-dependent methyl migration to produce 3-hydroxy-3-methyl-2-ketobutyrate (HMKB). In the reductase reaction, this 2-ketoacid undergoes a metal-dependent reduction by NADPH to yield (R)-2,3-dihydroxy-isovalerate. This is Ketol-acid reductoisomerase (NADP(+)) from Pyrobaculum arsenaticum (strain DSM 13514 / JCM 11321 / PZ6).